We begin with the raw amino-acid sequence, 321 residues long: High osmolarity signaling protein SHO1A (321 aa).

Topologically, residues 1 to 28 are cytoplasmic; sequence MDYNNNRYGGGGGGSKFNLGHIVGDPFS. Residues 29-49 form a helical membrane-spanning segment; it reads LATIAIATAGWLIAFVSSIIA. Topologically, residues 50-58 are extracellular; it reads NIDQEYPNY. The N-linked (GlcNAc...) asparagine glycan is linked to asparagine 57. Residues 59 to 79 form a helical membrane-spanning segment; the sequence is SWWALAYMFFVILGVTFAVAA. Position 80 (asparagine 80) is a topological domain, cytoplasmic. A helical membrane pass occupies residues 81–101; it reads AVYTYHVAMVGFLAAGLVFTT. Residues 102–116 are Extracellular-facing; the sequence is SSVNSLIYWSDKAKQ. The helical transmembrane segment at 117–137 threads the bilayer; sequence AAAAGFILLSMVSIVWIFYFG. Residues 138–321 lie on the Cytoplasmic side of the membrane; sequence SQPTASHRQT…IAPSNYLILL (184 aa). 2 disordered regions span residues 155 to 181 and 194 to 261; these read KDHAPSRASRHMTQSYRPETTHSAQHP and TSSP…QQPT. 2 stretches are compositionally biased toward polar residues: residues 165–181 and 225–237; these read HMTQSYRPETTHSAQHP and NFSNNQQPNPITS. Positions 238 to 249 are enriched in low complexity; sequence QNNPQNQHQQPQ. The segment covering 250-261 has biased composition (polar residues); that stretch reads DLTSPSTTQQPT. Residues 262–321 enclose the SH3 domain; it reads EYPYRAKAIYSYEANPDDANEISFNKHEILEVSDVSGRWWQAKKENGETGIAPSNYLILL.

It belongs to the SHO1 family. As to quaternary structure, forms homooligomers.

The protein resides in the cell membrane. Plasma membrane osmosensor that activates the high osmolarity glycerol (HOG) MAPK signaling pathway in response to high osmolarity. The sequence is that of High osmolarity signaling protein SHO1A (SHO1A) from Hortaea werneckii.